The sequence spans 455 residues: Phosphoglucosamine mutase (455 aa).

The Phosphoserine intermediate role is filled by Ser-104. Residues Ser-104, Asp-253, Asp-255, and Asp-257 each contribute to the Mg(2+) site. Phosphoserine is present on Ser-104.

It belongs to the phosphohexose mutase family. The cofactor is Mg(2+). Activated by phosphorylation.

It carries out the reaction alpha-D-glucosamine 1-phosphate = D-glucosamine 6-phosphate. Functionally, catalyzes the conversion of glucosamine-6-phosphate to glucosamine-1-phosphate. In Psychrobacter cryohalolentis (strain ATCC BAA-1226 / DSM 17306 / VKM B-2378 / K5), this protein is Phosphoglucosamine mutase.